Consider the following 244-residue polypeptide: NAD(P)H-quinone oxidoreductase subunit K (244 aa).

[4Fe-4S] cluster is bound by residues C60, C61, C125, and C156.

The protein belongs to the complex I 20 kDa subunit family. NDH-1 can be composed of about 15 different subunits; different subcomplexes with different compositions have been identified which probably have different functions. Requires [4Fe-4S] cluster as cofactor.

It is found in the cellular thylakoid membrane. The enzyme catalyses a plastoquinone + NADH + (n+1) H(+)(in) = a plastoquinol + NAD(+) + n H(+)(out). It carries out the reaction a plastoquinone + NADPH + (n+1) H(+)(in) = a plastoquinol + NADP(+) + n H(+)(out). NDH-1 shuttles electrons from an unknown electron donor, via FMN and iron-sulfur (Fe-S) centers, to quinones in the respiratory and/or the photosynthetic chain. The immediate electron acceptor for the enzyme in this species is believed to be plastoquinone. Couples the redox reaction to proton translocation, and thus conserves the redox energy in a proton gradient. Cyanobacterial NDH-1 also plays a role in inorganic carbon-concentration. In Prochlorococcus marinus (strain MIT 9515), this protein is NAD(P)H-quinone oxidoreductase subunit K.